The primary structure comprises 387 residues: O-phospho-L-seryl-tRNA:Cys-tRNA synthase 2 (387 aa).

Residues 89 to 90, asparagine 196, and 219 to 221 contribute to the pyridoxal 5'-phosphate site; these read AR and SGH. Residue lysine 222 is modified to N6-(pyridoxal phosphate)lysine.

It belongs to the SepCysS family. As to quaternary structure, homodimer. Interacts with SepRS. Pyridoxal 5'-phosphate is required as a cofactor.

It carries out the reaction O-phospho-L-seryl-tRNA(Cys) + hydrogen sulfide + H(+) = L-cysteinyl-tRNA(Cys) + phosphate. Converts O-phospho-L-seryl-tRNA(Cys) (Sep-tRNA(Cys)) to L-cysteinyl-tRNA(Cys) (Cys-tRNA(Cys)). The sequence is that of O-phospho-L-seryl-tRNA:Cys-tRNA synthase 2 from Methanococcoides burtonii (strain DSM 6242 / NBRC 107633 / OCM 468 / ACE-M).